A 118-amino-acid polypeptide reads, in one-letter code: Large ribosomal subunit protein bL20 (118 aa).

It belongs to the bacterial ribosomal protein bL20 family.

In terms of biological role, binds directly to 23S ribosomal RNA and is necessary for the in vitro assembly process of the 50S ribosomal subunit. It is not involved in the protein synthesizing functions of that subunit. This Aeromonas hydrophila subsp. hydrophila (strain ATCC 7966 / DSM 30187 / BCRC 13018 / CCUG 14551 / JCM 1027 / KCTC 2358 / NCIMB 9240 / NCTC 8049) protein is Large ribosomal subunit protein bL20.